The following is a 206-amino-acid chain: RNA pyrophosphohydrolase (206 aa).

In terms of domain architecture, Nudix hydrolase spans 6-149; that stretch reads GYRPNVGIVL…KRGVYARALR (144 aa). The Nudix box signature appears at 38 to 59; it reads GGMNTDETPVEAMYRELQEETG. Residues 175–206 are disordered; the sequence is MPGHTAGHDRPRKRPRSRGYWPKKAQGDVPPT.

This sequence belongs to the Nudix hydrolase family. RppH subfamily. It depends on a divalent metal cation as a cofactor.

Accelerates the degradation of transcripts by removing pyrophosphate from the 5'-end of triphosphorylated RNA, leading to a more labile monophosphorylated state that can stimulate subsequent ribonuclease cleavage. This Stenotrophomonas maltophilia (strain R551-3) protein is RNA pyrophosphohydrolase.